A 781-amino-acid chain; its full sequence is Protein translocase subunit SecA 2 (781 aa).

Residues glutamine 85, 103–107 (GEGKT), and aspartate 491 contribute to the ATP site.

This sequence belongs to the SecA family. As to quaternary structure, monomer and homodimer. Part of the essential Sec protein translocation apparatus which comprises SecA, SecYEG and auxiliary proteins SecDF. Other proteins may also be involved.

Its subcellular location is the cell membrane. It localises to the cytoplasm. It catalyses the reaction ATP + H2O + cellular proteinSide 1 = ADP + phosphate + cellular proteinSide 2.. Its function is as follows. Part of the Sec protein translocase complex. Interacts with the SecYEG preprotein conducting channel. Has a central role in coupling the hydrolysis of ATP to the transfer of proteins into and across the cell membrane, serving as an ATP-driven molecular motor driving the stepwise translocation of polypeptide chains across the membrane. In Clostridioides difficile (strain 630) (Peptoclostridium difficile), this protein is Protein translocase subunit SecA 2.